The primary structure comprises 403 residues: Poly(rC)-binding protein 4 (403 aa).

KH domains lie at 17–67 (TLTL…TITG), 101–154 (PVTL…TVSG), and 241–293 (TSSQ…TITG).

Its subcellular location is the cytoplasm. Functionally, single-stranded nucleic acid binding protein that binds preferentially to oligo dC. This Homo sapiens (Human) protein is Poly(rC)-binding protein 4 (PCBP4).